A 978-amino-acid chain; its full sequence is Transcription factor MYCGRDRAFT_87993 (978 aa).

2 C2H2-type zinc fingers span residues 2–24 (VFCTYCGQSFTRDEHLERHILTH) and 30–52 (FKCFTCHMSFARRDLLQRHYTVH). Positions 79-105 (CSNCAKTKTKCDKKFPCSRCAGRNLRC) form a DNA-binding region, zn(2)-C6 fungal-type. 2 disordered regions span residues 113-231 (ASKN…SPRF) and 426-445 (THREGRGTSNGSHSPNPSGA). Positions 152–165 (SSSPSSQKSGTPIS) are enriched in low complexity. The segment covering 432 to 445 (GTSNGSHSPNPSGA) has biased composition (polar residues).

It localises to the nucleus. Functionally, transcription factor; part of the gene cluster 29 that mediates the biosynthesis of dihydroxynaphthalene (DHN)-melanin, a bluish-green pigment forming a dark layer in the conidial wall that protects the conidia from UV radiations. This is Transcription factor MYCGRDRAFT_87993 from Zymoseptoria tritici (strain CBS 115943 / IPO323) (Speckled leaf blotch fungus).